Reading from the N-terminus, the 132-residue chain is D-ribose pyranase (132 aa).

The active-site Proton donor is the H20. Residues D28, H99, and 121 to 123 contribute to the substrate site; that span reads YSN.

It belongs to the RbsD / FucU family. RbsD subfamily. In terms of assembly, homodecamer.

It localises to the cytoplasm. The catalysed reaction is beta-D-ribopyranose = beta-D-ribofuranose. It participates in carbohydrate metabolism; D-ribose degradation; D-ribose 5-phosphate from beta-D-ribopyranose: step 1/2. Functionally, catalyzes the interconversion of beta-pyran and beta-furan forms of D-ribose. The polypeptide is D-ribose pyranase (Pseudomonas putida (strain ATCC 47054 / DSM 6125 / CFBP 8728 / NCIMB 11950 / KT2440)).